The primary structure comprises 264 residues: Thymidylate synthase (264 aa).

Arg-21 is a dUMP binding site. (6R)-5,10-methylene-5,6,7,8-tetrahydrofolate is bound at residue His-51. Residue Arg-126–Arg-127 coordinates dUMP. The active-site Nucleophile is Cys-146. DUMP contacts are provided by residues Arg-166–Asp-169, Asn-177, and His-207–Tyr-209. A (6R)-5,10-methylene-5,6,7,8-tetrahydrofolate-binding site is contributed by Asp-169. Residue Ala-263 coordinates (6R)-5,10-methylene-5,6,7,8-tetrahydrofolate.

Belongs to the thymidylate synthase family. Bacterial-type ThyA subfamily. In terms of assembly, homodimer.

The protein resides in the cytoplasm. It catalyses the reaction dUMP + (6R)-5,10-methylene-5,6,7,8-tetrahydrofolate = 7,8-dihydrofolate + dTMP. The protein operates within pyrimidine metabolism; dTTP biosynthesis. Catalyzes the reductive methylation of 2'-deoxyuridine-5'-monophosphate (dUMP) to 2'-deoxythymidine-5'-monophosphate (dTMP) while utilizing 5,10-methylenetetrahydrofolate (mTHF) as the methyl donor and reductant in the reaction, yielding dihydrofolate (DHF) as a by-product. This enzymatic reaction provides an intracellular de novo source of dTMP, an essential precursor for DNA biosynthesis. The protein is Thymidylate synthase of Legionella pneumophila (strain Corby).